We begin with the raw amino-acid sequence, 600 residues long: Adenine deaminase 4 (600 aa).

It belongs to the metallo-dependent hydrolases superfamily. Adenine deaminase family. It depends on Mn(2+) as a cofactor.

The catalysed reaction is adenine + H2O + H(+) = hypoxanthine + NH4(+). In Rhizobium meliloti (strain 1021) (Ensifer meliloti), this protein is Adenine deaminase 4.